The primary structure comprises 196 residues: Calmodulin-like protein 4 (196 aa).

The disordered stretch occupies residues 1–43; sequence MAAEHLLPGPPPSLADFRLEAGGKGTERGSGSSKPTGSSRGPR. A compositionally biased stretch (basic and acidic residues) spans 17–27; that stretch reads FRLEAGGKGTE. Residues 29–39 are compositionally biased toward polar residues; sequence GSGSSKPTGSS. 4 consecutive EF-hand domains span residues 51 to 86, 87 to 122, 124 to 159, and 160 to 195; these read DQIN…LGAS, PTPG…QIKQ, DPKK…LGEK, and LTHK…PGRD.

The protein belongs to the calmodulin family. Interacts with MYO7B; the interaction mediates the association of CALML4 with the IMAC/intermicrovillar adhesion complex. Interacts with MYO7A. In terms of tissue distribution, expressed in the intestinal tract. Dominant transcript in the intestinal tract.

The protein resides in the cell projection. The protein localises to the microvillus. As part of the intermicrovillar adhesion complex/IMAC plays a role in epithelial brush border differentiation, controlling microvilli organization and length. Acts as a light chain for MYO7B and is required for efficient targeting of the IMAC to the tips of border brush microvilli. This chain is Calmodulin-like protein 4, found in Homo sapiens (Human).